A 387-amino-acid polypeptide reads, in one-letter code: Protein FAM153B (387 aa).

Disordered regions lie at residues 233-256 (SYNG…RGDL) and 327-374 (TITG…KKSR). Positions 336–345 (SASPSSAPAE) are enriched in low complexity. Positions 347 to 359 (ATEKTKVEEEVKT) are enriched in basic and acidic residues. A compositionally biased stretch (basic residues) spans 360–374 (RKPKKKTRKPSKKSR).

The protein belongs to the FAM153 family.

In Homo sapiens (Human), this protein is Protein FAM153B (FAM153B).